Consider the following 1333-residue polypeptide: Inner capsid protein VP1 (1333 aa).

Residues 1-10 show a composition bias toward polar residues; it reads MHSTTNNSNK. Residues 1-93 form a disordered region; sequence MHSTTNNSNK…MDMEKAAETT (93 aa). Residues 11–20 show a composition bias toward basic and acidic residues; it reads RNNEEKHKQP. The segment covering 64-82 has biased composition (polar residues); it reads DGASRSGTNAKVATASSAR.

Belongs to the turreted BTV-fold inner capsid family. In terms of assembly, homodecamer; each decamer is made up of two conformers of VP2, called VP2A and VP2B. 12 homodecamers assemble to form an icosahedral capsid.

Its subcellular location is the virion. Inner capsid protein that self-assembles to form an icosahedral capsid with a T=2 symmetry, which consists of 120 copies of VP2, with channels at each of its five-fold vertices. This capsid constitutes the innermost concentric layer of the viral mature particle. This Lymantria dispar cypovirus 1 (isolate Rao) (LdCPV-1) protein is Inner capsid protein VP1 (S1).